The chain runs to 283 residues: Shikimate dehydrogenase (NADP(+)) (283 aa).

Shikimate-binding positions include Ser-19–Ser-21 and Thr-66. The Proton acceptor role is filled by Lys-70. Position 82 (Glu-82) interacts with NADP(+). Residues Asn-91 and Asp-106 each coordinate shikimate. NADP(+) contacts are provided by residues Gly-129–Ala-133 and Ile-225. Tyr-227 contacts shikimate. Gly-248 contacts NADP(+).

Belongs to the shikimate dehydrogenase family. Homodimer.

The catalysed reaction is shikimate + NADP(+) = 3-dehydroshikimate + NADPH + H(+). It functions in the pathway metabolic intermediate biosynthesis; chorismate biosynthesis; chorismate from D-erythrose 4-phosphate and phosphoenolpyruvate: step 4/7. Involved in the biosynthesis of the chorismate, which leads to the biosynthesis of aromatic amino acids. Catalyzes the reversible NADPH linked reduction of 3-dehydroshikimate (DHSA) to yield shikimate (SA). The chain is Shikimate dehydrogenase (NADP(+)) from Methanosphaera stadtmanae (strain ATCC 43021 / DSM 3091 / JCM 11832 / MCB-3).